Here is a 119-residue protein sequence, read N- to C-terminus: Translation initiation factor 1A (119 aa).

A disordered region spans residues 1–24 (MSEDDVDNSVKDFESGEENEESIG). The region spanning 24-98 (GRVILPNKKK…EKADVVYRYT (75 aa)) is the S1-like domain.

Belongs to the eIF-1A family.

Seems to be required for maximal rate of protein biosynthesis. Enhances ribosome dissociation into subunits and stabilizes the binding of the initiator Met-tRNA(I) to 40 S ribosomal subunits. This chain is Translation initiation factor 1A (eIF1A), found in Thermoplasma acidophilum (strain ATCC 25905 / DSM 1728 / JCM 9062 / NBRC 15155 / AMRC-C165).